The primary structure comprises 319 residues: Peroxidase 62 (319 aa).

The signal sequence occupies residues 1-22; that stretch reads MGLVRSFALVIVFLSCLIAVYG. Disulfide bonds link cysteine 34–cysteine 110, cysteine 67–cysteine 72, cysteine 116–cysteine 315, and cysteine 195–cysteine 226. Histidine 65 (proton acceptor) is an active-site residue. Ca(2+) contacts are provided by aspartate 66, valine 69, glycine 71, aspartate 73, and serine 75. Substrate is bound at residue proline 157. A heme b-binding site is contributed by histidine 188. Threonine 189 is a binding site for Ca(2+). N-linked (GlcNAc...) asparagine glycosylation occurs at asparagine 204. Ca(2+) contacts are provided by aspartate 239, serine 242, and aspartate 247. Residue asparagine 253 is glycosylated (N-linked (GlcNAc...) asparagine).

It belongs to the peroxidase family. Classical plant (class III) peroxidase subfamily. Heme b is required as a cofactor. It depends on Ca(2+) as a cofactor. Mainly expressed in roots.

It is found in the secreted. It carries out the reaction 2 a phenolic donor + H2O2 = 2 a phenolic radical donor + 2 H2O. In terms of biological role, removal of H(2)O(2), oxidation of toxic reductants, biosynthesis and degradation of lignin, suberization, auxin catabolism, response to environmental stresses such as wounding, pathogen attack and oxidative stress. These functions might be dependent on each isozyme/isoform in each plant tissue. This Arabidopsis thaliana (Mouse-ear cress) protein is Peroxidase 62 (PER62).